A 1426-amino-acid chain; its full sequence is A disintegrin and metalloproteinase with thrombospondin motifs 13 (1426 aa).

An N-terminal signal peptide occupies residues 1–33; that stretch reads MSQLCLWLTCQPCYAVSVRGILTGAIFILGCWG. Positions 34-76 are excised as a propeptide; that stretch reads LSDFQKSLLQDLEPKDVSSYFGHHAAPFTGHPPSHLQRLRRRR. The Peptidase M12B domain occupies 74–291; that stretch reads RRRTLEDILH…GQMHCFQDPP (218 aa). Glu-85 lines the Ca(2+) pocket. Asn-144 and Asn-148 each carry an N-linked (GlcNAc...) asparagine glycan. 3 disulfides stabilise this stretch: Cys-157–Cys-210, Cys-204–Cys-286, and Cys-246–Cys-270. Asp-175, Asp-184, Glu-186, Asp-189, and Glu-214 together coordinate Ca(2+). His-226 contacts Zn(2+). Glu-227 is a catalytic residue. Residues His-230 and His-236 each coordinate Zn(2+). The Ca(2+) site is built by Thr-281 and Asp-289. One can recognise a Disintegrin domain in the interval 295–388; the sequence is SGLTRHQLMA…LAELAPVAAV (94 aa). Intrachain disulfides connect Cys-316/Cys-342, Cys-327/Cys-352, Cys-337/Cys-371, Cys-365/Cys-376, Cys-401/Cys-438, Cys-405/Cys-443, Cys-416/Cys-428, Cys-488/Cys-527, Cys-513/Cys-532, Cys-537/Cys-553, and Cys-550/Cys-560. Positions 389–444 constitute a TSP type-1 1 domain; the sequence is HGHWSSWGPHSPCSRSCGGGVITRRRWCNNPRPAFGGRACVGEDLQAKMCNTQACE. The interval 445-561 is cysteine-rich; sequence KTQLEFMSEQ…VCGGDNSTCS (117 aa). A Cell attachment site motif is present at residues 503–505; the sequence is RGD. Residues 556–685 form a spacer region; it reads DNSTCSSRNG…PDITFSYFQL (130 aa). N-linked (GlcNAc...) asparagine glycosylation is found at Asn-557, Asn-564, Asn-584, and Asn-619. TSP type-1 domains follow at residues 687 to 746, 747 to 810, 808 to 871, 904 to 957, 958 to 1019, 1020 to 1078, and 1079 to 1137; these read QQAA…VSAP, CSPY…QPCP, PCPT…SLCS, WTPL…RARP, CPAR…EPCP, ARWK…IADC, and AFRW…GPCA. Ser-703 and Ser-762 each carry an O-linked (Fuc...) serine glycan. Asn-834 is a glycosylation site (N-linked (GlcNAc...) asparagine). A glycan (O-linked (Fuc...) serine) is linked at Ser-914. Thr-973 carries an O-linked (Fuc...) threonine glycan. Ser-1033 carries an O-linked (Fuc...) serine glycan. Asn-1057 carries N-linked (GlcNAc...) asparagine glycosylation. O-linked (Fuc...) serine glycosylation is present at Ser-1093. 2 consecutive CUB domains span residues 1195–1302 and 1293–1426; these read ACGR…FYKE and QPAP…LALS.

The cofactor is Zn(2+). Ca(2+) is required as a cofactor. In terms of processing, the precursor is processed by a furin endopeptidase which cleaves off the pro-domain. Post-translationally, O-glycosylated. O-fucosylated by POFUT2 on a serine or a threonine residue found within the consensus sequence C1-X(2)-(S/T)-C2-G of the TSP type-1 repeat domains where C1 and C2 are the first and second cysteine residue of the repeat, respectively. Fucosylated repeats can then be further glycosylated by the addition of a beta-1,3-glucose residue by the glucosyltransferase, B3GALTL. Fucosylation mediates the efficient secretion of ADAMTS13. May also be C-glycosylated on tryptophan residues within the consensus sequence W-X-X-W of the TPRs, and also N-glycosylated. These other glycosylations can also facilitate secretion. As to expression, plasma. Expression is consistently high in liver, medium in lung and spleen, low in skeletal muscle and undetectable in heart, brain, kidney and testis.

The protein localises to the secreted. It carries out the reaction The enzyme cleaves the von Willebrand factor at bond 842-Tyr-|-Met-843 within the A2 domain.. With respect to regulation, zinc and calcium ions cooperatively modulate enzyme activity. The cleavage of the pro-domain is not required for protease activity. Dependence on calcium for proteolytic activity is mediated by the high affinity site. Functionally, cleaves the vWF multimers in plasma into smaller forms thereby controlling vWF-mediated platelet thrombus formation. This is A disintegrin and metalloproteinase with thrombospondin motifs 13 (Adamts13) from Mus musculus (Mouse).